The sequence spans 207 residues: Abscisic acid receptor PYL9 (207 aa).

The interval 31–197 (FPPSTTTATT…NLQMLAAVAE (167 aa)) is START-like. Residues Lys74, 104–109 (ASTSTE), 131–137 (RLRNYRS), and Glu162 each bind abscisate. The short motif at 100–104 (SGLPA) is the Gate loop element. A Latch loop motif is present at residues 130-132 (HRL).

Belongs to the PYR/PYL/RCAR abscisic acid intracellular receptor family. In terms of assembly, homodimer. Interacts with PP2C06. Interacts with PP2C50. Binding to PP2C50 is dependent on the presence of abscisic acid (ABA). Interacts with PP2C30 and PP2C53. Binding to PP2C30 and PP2C53 is dependent on the presence of ABA.

The protein localises to the cytoplasm. Its subcellular location is the cytosol. It is found in the nucleus. Its function is as follows. Involved in abscisic acid (ABA) signaling during seed germination and abiotic stress response. Acts as a positive regulator of ABA-mediated inhibition of seed germination, and tolerance to drought and cold stresses. Inhibits the activity of the protein phosphatases PP2C06 and PP2C09 when activated by abscisic acid (ABA). In Oryza sativa subsp. japonica (Rice), this protein is Abscisic acid receptor PYL9.